Reading from the N-terminus, the 473-residue chain is Cysteine--tRNA ligase (473 aa).

Residue Cys28 participates in Zn(2+) binding. Residues 30–40 (PTVYNYIHIGN) carry the 'HIGH' region motif. Zn(2+)-binding residues include Cys210, His235, and Glu239. Positions 267 to 271 (KMSKS) match the 'KMSKS' region motif. Residue Lys270 participates in ATP binding.

This sequence belongs to the class-I aminoacyl-tRNA synthetase family. In terms of assembly, monomer. The cofactor is Zn(2+).

The protein localises to the cytoplasm. It catalyses the reaction tRNA(Cys) + L-cysteine + ATP = L-cysteinyl-tRNA(Cys) + AMP + diphosphate. In Fusobacterium nucleatum subsp. nucleatum (strain ATCC 25586 / DSM 15643 / BCRC 10681 / CIP 101130 / JCM 8532 / KCTC 2640 / LMG 13131 / VPI 4355), this protein is Cysteine--tRNA ligase.